The following is a 122-amino-acid chain: MEEDQELERKAIEELLKEAKRGKTRAETMGPMGWMKCPLASTNKRFLINTIKNTLPSHKEQDHEQKEGDKEPAKSQAQKEENPKKHRSHPYKHSFRARGSASYSPPRKRSSQDKYEKRSNRR.

At Met-1 the chain carries N-acetylmethionine. Residues 48-122 are disordered; the sequence is INTIKNTLPS…DKYEKRSNRR (75 aa). Over residues 57-83 the composition is skewed to basic and acidic residues; sequence SHKEQDHEQKEGDKEPAKSQAQKEENP. Residues 84-96 show a composition bias toward basic residues; it reads KKHRSHPYKHSFR. Ser-104 is subject to Phosphoserine. Residues 110-122 are compositionally biased toward basic and acidic residues; the sequence is SSQDKYEKRSNRR.

The chain is Protein POLR1D, isoform 2 (POLR1D) from Homo sapiens (Human).